Consider the following 1124-residue polypeptide: Zinc finger E-box-binding homeobox 1 (1124 aa).

Disordered stretches follow at residues 1–124 (MADG…NHDP) and 142–163 (APEEDQRQGTPEASGHDENGTP). The segment covering 18 to 30 (NNVTNYNTVVETN) has biased composition (low complexity). Residues serine 31 and serine 33 each carry the phosphoserine modification. A compositionally biased stretch (acidic residues) spans 44 to 62 (EESVTDAADCEGVPEDDLP). The span at 72–91 (SSEREGNAKNCWEDDRKEGQ) shows a compositional bias: basic and acidic residues. Residues 170–193 (LTCPYCDRGYKRFTSLKEHIKYRH) form a C2H2-type 1 zinc finger. Glycyl lysine isopeptide (Lys-Gly) (interchain with G-Cter in SUMO2) cross-links involve residues lysine 186 and lysine 195. 2 consecutive C2H2-type zinc fingers follow at residues 200 to 222 (FSCSLCSYTFAYRTQLERHMTSH) and 240 to 262 (FKCTECGKAFKYKHHLKEHLRIH). A C2H2-type 4; atypical zinc finger spans residues 268–292 (YECPNCKKRFSHSGSYSSHISSKKC). The segment at 304 to 327 (TGLKTSQCSSPSLSASPGSPTRPQ) is disordered. Lysine 307 participates in a covalent cross-link: Glycyl lysine isopeptide (Lys-Gly) (interchain with G-Cter in SUMO2). Residues 309-322 (SQCSSPSLSASPGS) are compositionally biased toward low complexity. Phosphoserine occurs at positions 313 and 322. Glycyl lysine isopeptide (Lys-Gly) (interchain with G-Cter in SUMO2) cross-links involve residues lysine 331 and lysine 335. Lysine 347 participates in a covalent cross-link: Glycyl lysine isopeptide (Lys-Gly) (interchain with G-Cter in SUMO); alternate. Residue lysine 347 forms a Glycyl lysine isopeptide (Lys-Gly) (interchain with G-Cter in SUMO2); alternate linkage. Residues lysine 439, lysine 493, lysine 504, lysine 515, lysine 548, and lysine 553 each participate in a glycyl lysine isopeptide (Lys-Gly) (interchain with G-Cter in SUMO2) cross-link. 2 disordered regions span residues 551-586 (DLKQPTQPPPLPAAEAEKPESSVSSATGDGNLSPSQ) and 636-714 (QISV…SSSR). The segment at residues 581-640 (NLSPSQPPLKNLLSLLKAYYALNAQPSAEELSKIADSVNLPLDVVKKWFEKMQAGQISVQ) is a DNA-binding region (homeobox; atypical). Residues serine 642, serine 679, serine 686, serine 693, and serine 700 each carry the phosphoserine modification. A compositionally biased stretch (polar residues) spans 656 to 687 (AKNNDQPQSANANEPQDSTVNLQSPLKMTNSP). The segment covering 692–714 (GSTTNGSRSSTPSPSPLNLSSSR) has biased composition (low complexity). Residue threonine 702 is modified to Phosphothreonine. Residue serine 704 is modified to Phosphoserine. Residue lysine 774 forms a Glycyl lysine isopeptide (Lys-Gly) (interchain with G-Cter in SUMO); alternate linkage. A Glycyl lysine isopeptide (Lys-Gly) (interchain with G-Cter in SUMO2); alternate cross-link involves residue lysine 774. The interval 856–898 (PPLKVIQPNGNQDERQDTSSEGVSNVEDQNDSDSTPPKKKMRK) is disordered. Residues 874–890 (SSEGVSNVEDQNDSDST) are compositionally biased toward polar residues. 2 C2H2-type zinc fingers span residues 904–926 (YACDLCDKIFQKSSSLLRHKYEH) and 932–954 (HECGICKKAFKHKHHLIEHMRLH). The C2H2-type 7; atypical zinc finger occupies 960–981 (YQCDKCGKRFSHSGSYSQHMNH). The disordered stretch occupies residues 989–1124 (EAEERDSTEQ…QVSEEKTNEA (136 aa)). Composition is skewed to acidic residues over residues 1031-1052 (EEDEDSEKEEEEEDKEMEELQE) and 1062-1084 (DEEEEEEEEEVEEEEVEEAENEG). Residues 1085–1099 (EEAKTEGLMKDDRAE) are compositionally biased toward basic and acidic residues. The span at 1100–1115 (SQASSLGQKVGESSEQ) shows a compositional bias: polar residues.

Belongs to the delta-EF1/ZFH-1 C2H2-type zinc-finger family. Interacts (via N-terminus) with SMARCA4/BRG1. Post-translationally, ubiquitinated, leading to degradation in a proteasome-dependent manner. Deubiquitinated by USP51, leading to stabilization. As to expression, colocalizes with SMARCA4/BRG1 in E-cadherin-negative cells from established lines, and stroma of normal colon as well as in de-differentiated epithelial cells at the invasion front of colorectal carcinomas (at protein level). Expressed in heart and skeletal muscle, but not in liver, spleen, or pancreas.

The protein localises to the nucleus. Functionally, acts as a transcriptional repressor. Inhibits interleukin-2 (IL-2) gene expression. Enhances or represses the promoter activity of the ATP1A1 gene depending on the quantity of cDNA and on the cell type. Represses E-cadherin promoter and induces an epithelial-mesenchymal transition (EMT) by recruiting SMARCA4/BRG1. Represses BCL6 transcription in the presence of the corepressor CTBP1. Positively regulates neuronal differentiation. Represses RCOR1 transcription activation during neurogenesis. Represses transcription by binding to the E box (5'-CANNTG-3'). In the absence of TGFB1, acts as a repressor of COL1A2 transcription via binding to the E-box in the upstream enhancer region. The sequence is that of Zinc finger E-box-binding homeobox 1 from Homo sapiens (Human).